A 139-amino-acid polypeptide reads, in one-letter code: ATP synthase epsilon chain (139 aa).

This sequence belongs to the ATPase epsilon chain family. As to quaternary structure, F-type ATPases have 2 components, CF(1) - the catalytic core - and CF(0) - the membrane proton channel. CF(1) has five subunits: alpha(3), beta(3), gamma(1), delta(1), epsilon(1). CF(0) has three main subunits: a, b and c.

The protein localises to the cell membrane. Its function is as follows. Produces ATP from ADP in the presence of a proton gradient across the membrane. The chain is ATP synthase epsilon chain from Streptococcus pneumoniae serotype 2 (strain D39 / NCTC 7466).